Here is a 160-residue protein sequence, read N- to C-terminus: MSTLEGRGFTEEQEALVVKSWSAMKPNAGELGLKFFLKIFEIAPSAQKLFSFLKDSNVPLERNPKLKSHAMSVFLMTCESAVQLRKAGKVTVRESSLKKLGASHFKHGVADEHFEVTKFALLETIKEAVPETWSPEMKNAWGEAYDKLVAAIKLEMKPSS.

The region spanning 8–157 (GFTEEQEALV…LVAAIKLEMK (150 aa)) is the Globin domain. Positions 41–45 (EIAPS) match the Homodimerization motif. Heme b is bound by residues serine 51, lysine 65, histidine 69, lysine 99, serine 103, and histidine 104. A Homodimerization motif is present at residues 111-123 (DEHFEVTKFALLE).

It belongs to the plant globin family. As to quaternary structure, homodimer. The cofactor is heme b.

It is found in the cytoplasm. The protein resides in the nucleus. It carries out the reaction Fe(III)-heme b-[protein] + nitric oxide + H2O = Fe(II)-heme b-[protein] + nitrite + 2 H(+). Phytoglobin that reduces nitrite to nitric oxide (NO) under anoxic conditions (e.g. during flooding or in waterlogged soil) and upon root nodulation. Required for general plant development and during nodulation, especially for the onset of symbiosis. Monitors nitric oxide (NO) levels during early phase of the nitrogen-fixing symbiosis and buffers oxygen in functioning nodules. May not function as an oxygen storage or transport protein. Has an unusually high affinity for O(2) through a hexacoordinate heme iron because of a very low dissociation constant. In Casuarina glauca (Swamp oak), this protein is Anaerobic nitrite reductase HBII.